Consider the following 368-residue polypeptide: Protein-glutamate methylesterase/protein-glutamine glutaminase (368 aa).

The Response regulatory domain maps to 9–126 (RVLVVDDSAF…SINMRELKDE (118 aa)). Residue Asp60 is modified to 4-aspartylphosphate. Positions 161-354 (SVPARIAVAI…ETVVRAVEMI (194 aa)) constitute a CheB-type methylesterase domain. Residues Ser173, His200, and Asp296 contribute to the active site.

This sequence belongs to the CheB family. In terms of processing, phosphorylated by CheA. Phosphorylation of the N-terminal regulatory domain activates the methylesterase activity.

Its subcellular location is the cytoplasm. The catalysed reaction is [protein]-L-glutamate 5-O-methyl ester + H2O = L-glutamyl-[protein] + methanol + H(+). It carries out the reaction L-glutaminyl-[protein] + H2O = L-glutamyl-[protein] + NH4(+). Its function is as follows. Involved in chemotaxis. Part of a chemotaxis signal transduction system that modulates chemotaxis in response to various stimuli. Catalyzes the demethylation of specific methylglutamate residues introduced into the chemoreceptors (methyl-accepting chemotaxis proteins or MCP) by CheR. Also mediates the irreversible deamidation of specific glutamine residues to glutamic acid. This chain is Protein-glutamate methylesterase/protein-glutamine glutaminase, found in Pyrococcus abyssi (strain GE5 / Orsay).